The chain runs to 296 residues: Phosphatidylglycerol--prolipoprotein diacylglyceryl transferase (296 aa).

A run of 4 helical transmembrane segments spans residues 10–30 (IAFSLGPVKVHWYGLMYLAAF), 57–77 (LLFYGMLGVVLGGRIGYMLFY), 92–112 (VWEGGMSFHGGLLGVLVACWL), and 119–139 (LHFFDVMDFVAPLVPLGLGFG). Arg140 provides a ligand contact to a 1,2-diacyl-sn-glycero-3-phospho-(1'-sn-glycerol). The next 3 membrane-spanning stretches (helical) occupy residues 194 to 214 (QLYEAALEGVVMFVVLWTFSM), 220 to 240 (YALSGLFALLYGVFRFIVEFV), and 254 to 274 (WLTMGQILSLPLIAVGLALLA).

Belongs to the Lgt family.

Its subcellular location is the cell inner membrane. The catalysed reaction is L-cysteinyl-[prolipoprotein] + a 1,2-diacyl-sn-glycero-3-phospho-(1'-sn-glycerol) = an S-1,2-diacyl-sn-glyceryl-L-cysteinyl-[prolipoprotein] + sn-glycerol 1-phosphate + H(+). It functions in the pathway protein modification; lipoprotein biosynthesis (diacylglyceryl transfer). Its function is as follows. Catalyzes the transfer of the diacylglyceryl group from phosphatidylglycerol to the sulfhydryl group of the N-terminal cysteine of a prolipoprotein, the first step in the formation of mature lipoproteins. This chain is Phosphatidylglycerol--prolipoprotein diacylglyceryl transferase, found in Xanthomonas oryzae pv. oryzae (strain MAFF 311018).